The primary structure comprises 346 residues: N-acetyl-gamma-glutamyl-phosphate reductase (346 aa).

Cys150 is a catalytic residue.

This sequence belongs to the NAGSA dehydrogenase family. Type 1 subfamily.

It localises to the cytoplasm. The enzyme catalyses N-acetyl-L-glutamate 5-semialdehyde + phosphate + NADP(+) = N-acetyl-L-glutamyl 5-phosphate + NADPH + H(+). It functions in the pathway amino-acid biosynthesis; L-arginine biosynthesis; N(2)-acetyl-L-ornithine from L-glutamate: step 3/4. Its function is as follows. Catalyzes the NADPH-dependent reduction of N-acetyl-5-glutamyl phosphate to yield N-acetyl-L-glutamate 5-semialdehyde. The polypeptide is N-acetyl-gamma-glutamyl-phosphate reductase (Moorella thermoacetica (strain ATCC 39073 / JCM 9320)).